The following is a 390-amino-acid chain: Digeranylgeranylglycerophospholipid reductase (390 aa).

FAD is bound by residues Ala18, Glu37, Cys48, Ala49, Ala51, Arg98, Val122, Asp278, Gly290, and Ile291. Residue Val368 coordinates a 2,3-bis-O-(geranylgeranyl)-sn-glycerol 1-phospholipid.

The protein belongs to the geranylgeranyl reductase family. DGGGPL reductase subfamily. FAD is required as a cofactor.

It catalyses the reaction a 2,3-bis-O-phytanyl-sn-glycerol 1-phospholipid + 8 A = a 2,3-bis-O-(geranylgeranyl)-sn-glycerol 1-phospholipid + 8 AH2. It carries out the reaction 2,3-bis-O-(phytanyl)-sn-glycerol 1-phosphate + 8 A = 2,3-bis-O-(geranylgeranyl)-sn-glycerol 1-phosphate + 8 AH2. The enzyme catalyses CDP-2,3-bis-O-(geranylgeranyl)-sn-glycerol + 8 AH2 = CDP-2,3-bis-O-(phytanyl)-sn-glycerol + 8 A. The catalysed reaction is archaetidylserine + 8 AH2 = 2,3-bis-O-phytanyl-sn-glycero-3-phospho-L-serine + 8 A. It functions in the pathway membrane lipid metabolism; glycerophospholipid metabolism. Functionally, is involved in the reduction of 2,3-digeranylgeranylglycerophospholipids (unsaturated archaeols) into 2,3-diphytanylglycerophospholipids (saturated archaeols) in the biosynthesis of archaeal membrane lipids. Catalyzes the formation of archaetidic acid (2,3-di-O-phytanyl-sn-glyceryl phosphate) from 2,3-di-O-geranylgeranylglyceryl phosphate (DGGGP) via the hydrogenation of each double bond of the isoprenoid chains. Is also probably able to reduce double bonds of geranyl groups in CDP-2,3-bis-O-(geranylgeranyl)-sn-glycerol and archaetidylserine, thus acting at various stages in the biosynthesis of archaeal membrane lipids. The chain is Digeranylgeranylglycerophospholipid reductase from Methanococcus maripaludis (strain C7 / ATCC BAA-1331).